Here is a 185-residue protein sequence, read N- to C-terminus: MINEIKKDTQDRMEKSLEALKGHIAKIRTGRAQPSLLDAIQVDYYGSATPLRQLANVVAEDARTLAVTVFDRSLIQAVEKAILTSDLGLNPSSAGTTIRVPLPPLTEERRRDLIKIVKGEGEQGKVAIRNVRRDANDKIKALLKDKEISENDQRKAEEEIQKITDSYIKKVDEVLAEKEKELMDF.

The protein belongs to the RRF family.

The protein localises to the cytoplasm. Responsible for the release of ribosomes from messenger RNA at the termination of protein biosynthesis. May increase the efficiency of translation by recycling ribosomes from one round of translation to another. The chain is Ribosome-recycling factor from Mannheimia succiniciproducens (strain KCTC 0769BP / MBEL55E).